Here is a 150-residue protein sequence, read N- to C-terminus: Large ribosomal subunit protein bL9 (150 aa).

Belongs to the bacterial ribosomal protein bL9 family.

Functionally, binds to the 23S rRNA. The protein is Large ribosomal subunit protein bL9 of Wigglesworthia glossinidia brevipalpis.